A 48-amino-acid chain; its full sequence is Protein TUNAR (48 aa).

Residues methionine 1 to glutamate 20 are disordered. A compositionally biased stretch (basic and acidic residues) spans aspartate 10 to glutamate 20. A helical transmembrane segment spans residues leucine 24 to isoleucine 44.

As to quaternary structure, interacts with ATPase ATP2A2/SERCA2. Interacts with ATPase ATP2A3/SERCA3; the interaction occurs at low levels in low glucose conditions and is increased by high glucose levels. As to expression, highly expressed in pancreatic islets where it is enriched in the insulin-producing beta cells.

The protein localises to the endoplasmic reticulum membrane. It localises to the extracellular vesicle membrane. In terms of biological role, in neurons, plays a role in the regulation of intracellular Ca(2+), possibly by acting as an activator of ATP2A2/SERCA2, thus increasing the efficiency with which Ca(2+) is removed from the cytoplasm. Inhibits differentiation of embryonic stem cells into neurons and inhibits neurite outgrowth, likely as a result of its role in intracellular Ca(2+) regulation. In pancreatic beta cells, lowers Ca(2+) levels in the endoplasmic reticulum and enhances glucose-stimulated insulin secretion. The protein is Protein TUNAR of Homo sapiens (Human).